The following is a 390-amino-acid chain: Methylthioribose-1-phosphate isomerase (390 aa).

Substrate contacts are provided by residues 53–55 (RGA), arginine 90, and glutamine 207. The active-site Proton donor is aspartate 248. Residue 258–259 (NK) participates in substrate binding.

Belongs to the EIF-2B alpha/beta/delta subunits family. MtnA subfamily.

The enzyme catalyses 5-(methylsulfanyl)-alpha-D-ribose 1-phosphate = 5-(methylsulfanyl)-D-ribulose 1-phosphate. The catalysed reaction is 5-deoxy-alpha-D-ribose 1-phosphate = 5-deoxy-D-ribulose 1-phosphate. Its pathway is amino-acid biosynthesis; L-methionine biosynthesis via salvage pathway; L-methionine from S-methyl-5-thio-alpha-D-ribose 1-phosphate: step 1/6. In terms of biological role, catalyzes the interconversion of methylthioribose-1-phosphate (MTR-1-P) into methylthioribulose-1-phosphate (MTRu-1-P). Also catalyzes the interconversion of 5-deoxyribose 1-phosphate and 5-deoxyribulose 1-phosphate. Part of a bifunctional DHAP-shunt salvage pathway for SAM by-products. The sequence is that of Methylthioribose-1-phosphate isomerase from Rhodospirillum rubrum (strain ATCC 11170 / ATH 1.1.1 / DSM 467 / LMG 4362 / NCIMB 8255 / S1).